We begin with the raw amino-acid sequence, 405 residues long: Venom serine protease 34 (405 aa).

A signal peptide spans 1–35; that stretch reads MIFTNNIAAFQNVVLVKKVKIVLLIFYGSIMFSMT. Intrachain disulfides connect cysteine 42–cysteine 70 and cysteine 95–cysteine 111. A CUB domain is found at 42–147; it reads CDYYQNLNLG…EVRPIKRVKD (106 aa). Asparagine 113 is a glycosylation site (N-linked (GlcNAc...) asparagine). In terms of domain architecture, Peptidase S1 spans 161–397; it reads IVGGTNTGIN…YIDWIVSQTP (237 aa). Cysteine 188 and cysteine 204 are oxidised to a cystine. Histidine 203 serves as the catalytic Charge relay system. N-linked (GlcNAc...) asparagine glycans are attached at residues asparagine 209 and asparagine 229. Aspartate 257 functions as the Charge relay system in the catalytic mechanism. 2 disulfides stabilise this stretch: cysteine 323–cysteine 336 and cysteine 345–cysteine 375. Serine 349 serves as the catalytic Charge relay system.

The protein belongs to the peptidase S1 family. As to expression, expressed by the venom duct.

It localises to the secreted. The chain is Venom serine protease 34 from Apis mellifera (Honeybee).